The following is a 374-amino-acid chain: Anhydro-N-acetylmuramic acid kinase (374 aa).

An ATP-binding site is contributed by 9-16 (GTSLDGID).

The protein belongs to the anhydro-N-acetylmuramic acid kinase family.

It carries out the reaction 1,6-anhydro-N-acetyl-beta-muramate + ATP + H2O = N-acetyl-D-muramate 6-phosphate + ADP + H(+). It participates in amino-sugar metabolism; 1,6-anhydro-N-acetylmuramate degradation. The protein operates within cell wall biogenesis; peptidoglycan recycling. Functionally, catalyzes the specific phosphorylation of 1,6-anhydro-N-acetylmuramic acid (anhMurNAc) with the simultaneous cleavage of the 1,6-anhydro ring, generating MurNAc-6-P. Is required for the utilization of anhMurNAc either imported from the medium or derived from its own cell wall murein, and thus plays a role in cell wall recycling. The polypeptide is Anhydro-N-acetylmuramic acid kinase (Methylobacterium nodulans (strain LMG 21967 / CNCM I-2342 / ORS 2060)).